The chain runs to 198 residues: Transcription factor elt-7 (198 aa).

Polar residues predominate over residues 1 to 18 (MLPETTTLQPLPSVTTIM). Residues 1–20 (MLPETTTLQPLPSVTTIMNE) form a disordered region. Residues 143–167 (CSHCSTTTTTLWRKNDEGNLECNAC) form a GATA-type zinc finger.

Its subcellular location is the nucleus. In terms of biological role, transcriptional activator that binds to the consensus sequence 5'-[AT]GATA[AG]-3'. Required for gut-specific differentiation, specifically acting with the GATA region-binding transcription factor elt-2 to control normal gene expression and promote normal formation of the intestine. May have a protective role in response to infection by Gram-negative bacteria such as P.aeruginosa. In Caenorhabditis elegans, this protein is Transcription factor elt-7.